Consider the following 1656-residue polypeptide: Probable phospholipid-transporting ATPase DNF3 (1656 aa).

The Lumenal portion of the chain corresponds to 1 to 164 (MGIADGQRRR…PRQLYAQFSK (164 aa)). A disordered region spans residues 36 to 74 (ELEDINESKTFSGSDNNDKDDRDETSGNYAAEEDYEMEE). A compositionally biased stretch (basic and acidic residues) spans 51–60 (NNDKDDRDET). The helical transmembrane segment at 165–185 (LANTYFFIVAVLQMIPGWSTT) threads the bilayer. The Cytoplasmic segment spans residues 186-451 (GTYTTIIPLC…RTKAPKLQRK (266 aa)). Residues 452–472 (INMIIVFMVFVVATISLFSYL) traverse the membrane as a helical segment. Topologically, residues 473-495 (GHVLHKKKYIDQNKAWYLFQADA) are lumenal. A helical membrane pass occupies residues 496–516 (GVAPTIMSFIIMYNTVIPLSL). Residues 517-1157 (YVTMEIIKVV…ISKMNAVSQE (641 aa)) are Cytoplasmic-facing. Aspartate 566 (4-aspartylphosphate intermediate) is an active-site residue. Positions 566, 567, and 568 each coordinate ATP. Aspartate 566 lines the Mg(2+) pocket. Position 568 (threonine 568) interacts with Mg(2+). Residue serine 627 is modified to Phosphoserine. ATP-binding positions include glutamate 765, phenylalanine 813, serine 815, lysine 818, lysine 838, arginine 1034, threonine 1035, threonine 1114, glycine 1115, aspartate 1116, 1167–1174 (VVVIDGAT), arginine 1202, and lysine 1208. Residues 1158-1178 (VDSGNIAHCVVVIDGATMAMF) traverse the membrane as a helical segment. Residues 1179–1318 (EGNPTYMSVF…MFSGSSLYEP (140 aa)) are Lumenal-facing. Residue aspartate 1229 coordinates Mg(2+). The ATP site is built by asparagine 1232 and aspartate 1233. The helical transmembrane segment at 1319–1339 (WSLSMFNTLFTSLPVLCIGMF) threads the bilayer. Residues 1340-1365 (EKDLKPMTLLTVPELYSYGRLSQGFN) are Cytoplasmic-facing. A helical membrane pass occupies residues 1366 to 1386 (WLIFMEWVILATTNSLIITFL). Over 1387-1395 (NVVMWGMSS) the chain is Lumenal. Residues 1396–1416 (LSDNTMYPLGLINFTAIVALI) traverse the membrane as a helical segment. Residues 1417–1432 (NVKSQFVEMHNRNWLA) are Cytoplasmic-facing. The helical transmembrane segment at 1433–1453 (FTSVVLSCGGWLVWCCALPIL) threads the bilayer. The Lumenal segment spans residues 1454 to 1473 (NNTDQIYDVAYGFYNHFGKD). The chain crosses the membrane as a helical span at residues 1474–1494 (ITFWCTSLVLALLPITLDIVY). Over 1495–1656 (KTFKVMIWPS…IIQARLKDLE (162 aa)) the chain is Cytoplasmic. The tract at residues 1554 to 1576 (PRTNSRASAKTHNSSIYSMSNGN) is disordered.

It belongs to the cation transport ATPase (P-type) (TC 3.A.3) family. Type IV subfamily. As to quaternary structure, component of a flippase complex consisting of DNF3 and YNR048W/CRF1. Interacts with YNR048W/CRF1; the interaction is direct and required for proper expression and endoplasmic reticulum (ER) export of either partner. Mg(2+) is required as a cofactor.

Its subcellular location is the golgi apparatus. It is found in the trans-Golgi network membrane. It localises to the endosome membrane. The catalysed reaction is ATP + H2O + phospholipidSide 1 = ADP + phosphate + phospholipidSide 2.. It catalyses the reaction a 1,2-diacyl-sn-glycero-3-phosphocholine(out) + ATP + H2O = a 1,2-diacyl-sn-glycero-3-phosphocholine(in) + ADP + phosphate + H(+). It carries out the reaction a 1,2-diacyl-sn-glycero-3-phosphoethanolamine(out) + ATP + H2O = a 1,2-diacyl-sn-glycero-3-phosphoethanolamine(in) + ADP + phosphate + H(+). Functionally, catalytic component of a P4-ATPase flippase complex which catalyzes the hydrolysis of ATP coupled to the transport of phosphatidylcholine and small amounts of phosphatidylethanolamine from the lumen to the cytosolic leaflet of the trans-Golgi network and ensures the maintenance of asymmetric distribution of phospholipids. May be involved in transport from early endosomes to the trans-Golgi network (TGN). The chain is Probable phospholipid-transporting ATPase DNF3 (DNF3) from Saccharomyces cerevisiae (strain ATCC 204508 / S288c) (Baker's yeast).